A 426-amino-acid chain; its full sequence is Phosphomethylpyrimidine synthase (426 aa).

Substrate-binding positions include asparagine 66, methionine 95, tyrosine 124, histidine 163, 185-187 (SRG), 226-229 (DGLR), and glutamate 265. Histidine 269 provides a ligand contact to Zn(2+). Tyrosine 292 contributes to the substrate binding site. Zn(2+) is bound at residue histidine 333. Cysteine 407, cysteine 410, and cysteine 414 together coordinate [4Fe-4S] cluster.

The protein belongs to the ThiC family. Requires [4Fe-4S] cluster as cofactor.

The enzyme catalyses 5-amino-1-(5-phospho-beta-D-ribosyl)imidazole + S-adenosyl-L-methionine = 4-amino-2-methyl-5-(phosphooxymethyl)pyrimidine + CO + 5'-deoxyadenosine + formate + L-methionine + 3 H(+). Its pathway is cofactor biosynthesis; thiamine diphosphate biosynthesis. Catalyzes the synthesis of the hydroxymethylpyrimidine phosphate (HMP-P) moiety of thiamine from aminoimidazole ribotide (AIR) in a radical S-adenosyl-L-methionine (SAM)-dependent reaction. The chain is Phosphomethylpyrimidine synthase from Thermococcus gammatolerans (strain DSM 15229 / JCM 11827 / EJ3).